The following is a 411-amino-acid chain: UDP-N-acetylmuramoylalanine--D-glutamate ligase (411 aa).

Gly92–Thr98 is an ATP binding site.

It belongs to the MurCDEF family.

It localises to the cytoplasm. It catalyses the reaction UDP-N-acetyl-alpha-D-muramoyl-L-alanine + D-glutamate + ATP = UDP-N-acetyl-alpha-D-muramoyl-L-alanyl-D-glutamate + ADP + phosphate + H(+). The protein operates within cell wall biogenesis; peptidoglycan biosynthesis. In terms of biological role, cell wall formation. Catalyzes the addition of glutamate to the nucleotide precursor UDP-N-acetylmuramoyl-L-alanine (UMA). This chain is UDP-N-acetylmuramoylalanine--D-glutamate ligase, found in Hydrogenobaculum sp. (strain Y04AAS1).